A 290-amino-acid polypeptide reads, in one-letter code: Forkhead box protein O3B (290 aa).

Disordered stretches follow at residues 1 to 30 (METDLAEMPEKGVLSSQDSPHFQEKSTEEG) and 44 to 239 (AAAA…SSRR). Composition is skewed to low complexity over residues 44–59 (AAAAAAPGSRSLRGVH) and 75–91 (RTPAAAGRAAKMAEAPA). T117 is modified (phosphothreonine; by PKB/AKT1). Acidic residues predominate over residues 142 to 153 (IPEEEDDEDDED). Residues 242 to 290 (WGNLSYADLITRAIESSPDRRLTLSQIYEWMVSCVPYFKDKGNSNSSAG) constitute a DNA-binding region (fork-head).

It is found in the cytoplasm. Its subcellular location is the cytosol. Functionally, transcription factor. In Homo sapiens (Human), this protein is Forkhead box protein O3B.